The following is a 75-amino-acid chain: Supwaprin-a (75 aa).

The first 24 residues, 1–24, serve as a signal peptide directing secretion; sequence MSSGGLLLLLGFLTLWAELTPVSG. In terms of domain architecture, WAP spans 27-72; it reads RPKKPGLCPPRPQKPPCVRECKNDWSCPGEQKCCRYGCIFECRDPI. 4 cysteine pairs are disulfide-bonded: cysteine 34-cysteine 60, cysteine 43-cysteine 64, cysteine 47-cysteine 59, and cysteine 53-cysteine 68.

Belongs to the venom waprin family. In terms of tissue distribution, expressed by the venom gland.

It localises to the secreted. Functionally, damages membranes of susceptible bacteria. Has no hemolytic activity. Not toxic to mice. Does not inhibit the proteinases elastase and cathepsin G. This chain is Supwaprin-a, found in Austrelaps superbus (Lowland copperhead snake).